Reading from the N-terminus, the 446-residue chain is Methionine aminopeptidase 2-3 (446 aa).

Residues 14–116 (ITDAGANGAD…ENRYRTTSEE (103 aa)) form a disordered region. The span at 61 to 76 (AKKKKNKKRKPKKKQP) shows a compositional bias: basic residues. Over residues 86-96 (PLSQLFPNNSY) the composition is skewed to polar residues. Residues 98 to 116 (KGEEVEYKDENRYRTTSEE) show a composition bias toward basic and acidic residues. Histidine 199 is a substrate binding site. A divalent metal cation contacts are provided by aspartate 219, aspartate 230, and histidine 299. Histidine 307 serves as a coordination point for substrate. The a divalent metal cation site is built by glutamate 332 and glutamate 427.

This sequence belongs to the peptidase M24A family. Methionine aminopeptidase eukaryotic type 2 subfamily. Co(2+) serves as cofactor. It depends on Zn(2+) as a cofactor. Requires Mn(2+) as cofactor. Fe(2+) is required as a cofactor.

The protein localises to the cytoplasm. It catalyses the reaction Release of N-terminal amino acids, preferentially methionine, from peptides and arylamides.. Its function is as follows. Cotranslationally removes the N-terminal methionine from nascent proteins. The N-terminal methionine is often cleaved when the second residue in the primary sequence is small and uncharged (Met-Ala-, Cys, Gly, Pro, Ser, Thr, or Val). This Aspergillus fumigatus (strain CBS 144.89 / FGSC A1163 / CEA10) (Neosartorya fumigata) protein is Methionine aminopeptidase 2-3.